A 183-amino-acid polypeptide reads, in one-letter code: Ribosome maturation factor RimM (183 aa).

The 82-residue stretch at 102 to 183 folds into the PRC barrel domain; it reads DDDFYWHQLE…CITVDWDPEF (82 aa).

This sequence belongs to the RimM family. Binds ribosomal protein uS19.

It is found in the cytoplasm. Its function is as follows. An accessory protein needed during the final step in the assembly of 30S ribosomal subunit, possibly for assembly of the head region. Essential for efficient processing of 16S rRNA. May be needed both before and after RbfA during the maturation of 16S rRNA. It has affinity for free ribosomal 30S subunits but not for 70S ribosomes. The chain is Ribosome maturation factor RimM from Saccharophagus degradans (strain 2-40 / ATCC 43961 / DSM 17024).